An 829-amino-acid polypeptide reads, in one-letter code: MSEDHVQNDSQIEAVFRVNDSHKHKKDKEHRHKEHKKDKDREKSKHNNSEHRDPSEKKHKDKHKNNDKHREKDGEKHRERDGEKHRDKNGEKHRDGEKHKEKDIEKHKEVEKHRVKDGEKHKEKDVEKHKEKDVEKHRDGEKHKHRDKDREKKKEEKMKSSSGGVKVKKENGFSSPVRVKDEPEDQGFYVSPKENKAMKRPREDDEDYKPKKIKSEDDKKGKKRKQEEEDIKPKKKSKAKGNEEGVKKKKVKKEEEEKWKWWEEERHRDGIKWKFLEHKGPVFAPPYEPVPDNVKFYYDGNLVKLSPKAEEVATFFAKMLDHEYTTKDIFRKNFFKDWKKEMTTDERNLITNLSKCDFNAMSLYFKEQSEARKNMTKEEKLKIKAENERLLQEYGYCIMDNHKERIANFRIEPPGLFRGRGDHPKMGKLKKRIMPEDIIINCSKDSKIPVAPAGHKWKEVRHDGKVTWLVSWTENIQGSIKYIMLNPSSRIKGEKDWQKYETARRLKMCVEKIRNTYKEDWKSKEMKVRQRAVALYFIDKLALRAGNEKEEGETADTVGCCSLRVEHINLFQELDGQEFVVEFDFPGKDSIRYYNKVPVEKRVFKNLQLFMENKQPDDDLFDRLNTSILNKHLQDLMEGLTAKVFRTYNASITLQQQLDELTNSDDNVPAKILSYNRANRAVAILCNHQRAPPKTFEKSMMNLQGKIDAKKDQLADARREFKSAKADAKVRRDEKTKKLVESKKKAVQRIEEQLMKLEVQATDREENKQIALGTSKLNYLDPRISVAWCKKYGVPIEKIYNKTQRKNLLGPSIWQTTTSNFNAEQRCFS.

The disordered stretch occupies residues 1-248 (MSEDHVQNDS…AKGNEEGVKK (248 aa)). A compositionally biased stretch (basic residues) spans 22–36 (HKHKKDKEHRHKEHK). Basic and acidic residues-rich tracts occupy residues 37–58 (KDKD…SEKK), 68–159 (KHRE…EKMK), and 193–220 (KENK…DDKK). 3 interaction with DNA regions span residues 481–482 (KY), 544–549 (RAGNEK), and 641–643 (TAK). The region spanning 488–821 (SSRIKGEKDW…SIWQTTTSNF (334 aa)) is the Topo IB-type catalytic domain. Catalysis depends on Tyr-779, which acts as the O-(3'-phospho-DNA)-tyrosine intermediate.

It belongs to the type IB topoisomerase family. Monomer.

It localises to the nucleus. It catalyses the reaction ATP-independent breakage of single-stranded DNA, followed by passage and rejoining.. Functionally, releases the supercoiling and torsional tension of DNA introduced during the DNA replication and transcription by transiently cleaving and rejoining one strand of the DNA duplex. Introduces a single-strand break via transesterification at a target site in duplex DNA. The scissile phosphodiester is attacked by the catalytic tyrosine of the enzyme, resulting in the formation of a DNA-(3'-phosphotyrosyl)-enzyme intermediate and the expulsion of a 5'-OH DNA strand. TThe free DNA strand then rotates around the intact phosphodiester bond on the opposing strand, thus removing DNA supercoils. Finally, in the religation step, the DNA 5'-OH attacks the covalent intermediate to expel the active-site tyrosine and restore the DNA phosphodiester backbone. May play a role in the circadian transcription of the core circadian clock component BMAL1. This chain is DNA topoisomerase 1 (top1), found in Xenopus laevis (African clawed frog).